The chain runs to 232 residues: Octanoyltransferase (232 aa).

A BPL/LPL catalytic domain is found at 44 to 219 (EHTADEVWVV…QLARQFGLVL (176 aa)). Residues 83-90 (RGGQVTYH), 150-152 (ALG), and 163-165 (GLS) each bind substrate. Cys181 serves as the catalytic Acyl-thioester intermediate.

It belongs to the LipB family.

Its subcellular location is the cytoplasm. It catalyses the reaction octanoyl-[ACP] + L-lysyl-[protein] = N(6)-octanoyl-L-lysyl-[protein] + holo-[ACP] + H(+). It functions in the pathway protein modification; protein lipoylation via endogenous pathway; protein N(6)-(lipoyl)lysine from octanoyl-[acyl-carrier-protein]: step 1/2. Functionally, catalyzes the transfer of endogenously produced octanoic acid from octanoyl-acyl-carrier-protein onto the lipoyl domains of lipoate-dependent enzymes. Lipoyl-ACP can also act as a substrate although octanoyl-ACP is likely to be the physiological substrate. This chain is Octanoyltransferase, found in Xanthomonas euvesicatoria pv. vesicatoria (strain 85-10) (Xanthomonas campestris pv. vesicatoria).